The following is a 475-amino-acid chain: Glutamyl-tRNA(Gln) amidotransferase subunit A (475 aa).

Residues Lys-69 and Ser-144 each act as charge relay system in the active site. The active-site Acyl-ester intermediate is Ser-168.

It belongs to the amidase family. GatA subfamily. In terms of assembly, heterotrimer of A, B and C subunits.

It catalyses the reaction L-glutamyl-tRNA(Gln) + L-glutamine + ATP + H2O = L-glutaminyl-tRNA(Gln) + L-glutamate + ADP + phosphate + H(+). Allows the formation of correctly charged Gln-tRNA(Gln) through the transamidation of misacylated Glu-tRNA(Gln) in organisms which lack glutaminyl-tRNA synthetase. The reaction takes place in the presence of glutamine and ATP through an activated gamma-phospho-Glu-tRNA(Gln). The polypeptide is Glutamyl-tRNA(Gln) amidotransferase subunit A (Methanosarcina barkeri (strain Fusaro / DSM 804)).